We begin with the raw amino-acid sequence, 230 residues long: Cytidylate kinase (230 aa).

An ATP-binding site is contributed by 12–20; that stretch reads GPSGAGKGT.

The protein belongs to the cytidylate kinase family. Type 1 subfamily.

The protein localises to the cytoplasm. The enzyme catalyses CMP + ATP = CDP + ADP. It catalyses the reaction dCMP + ATP = dCDP + ADP. The polypeptide is Cytidylate kinase (Aeromonas salmonicida (strain A449)).